The sequence spans 218 residues: Serine/threonine-protein phosphatase 1 (218 aa).

Residues Asp24, His26, Asp53, and Asn79 each contribute to the Mn(2+) site. The Proton donor role is filled by His80. A Mn(2+)-binding site is contributed by His187.

This sequence belongs to the PPP phosphatase family. PP-1 subfamily. Mn(2+) is required as a cofactor.

It catalyses the reaction O-phospho-L-seryl-[protein] + H2O = L-seryl-[protein] + phosphate. It carries out the reaction O-phospho-L-threonyl-[protein] + H2O = L-threonyl-[protein] + phosphate. Functionally, plays a key role in signaling protein misfolding via the CpxR/CPXA transducing system. It also modulates the phosphorylated status of many phosphoproteins in E.coli, some of which acting as major chaperones. Has been shown, in vitro, to act on Ser, Thr and Tyr-phosphorylated substrates. This is Serine/threonine-protein phosphatase 1 (pphA) from Escherichia coli (strain K12).